We begin with the raw amino-acid sequence, 239 residues long: Sugar fermentation stimulation protein homolog (239 aa).

This sequence belongs to the SfsA family.

This Maridesulfovibrio salexigens (strain ATCC 14822 / DSM 2638 / NCIMB 8403 / VKM B-1763) (Desulfovibrio salexigens) protein is Sugar fermentation stimulation protein homolog.